A 244-amino-acid polypeptide reads, in one-letter code: INO80 complex subunit E (244 aa).

Residues 10–54 are a coiled coil; the sequence is DYKKKYRNLKRKLKFLIYEHECFQEELRKAQRKLLKVSRDKSFLL. 2 disordered regions span residues 59–187 and 222–244; these read QYEN…PLTF and FSDA…DIPE. Composition is skewed to low complexity over residues 99 to 115 and 122 to 136; these read PPLG…LPPS and ASRA…LASP. Residues 157–171 are compositionally biased toward basic residues; the sequence is RPKREKRPRLPRKLK. Residues lysine 159 and lysine 171 each participate in a glycyl lysine isopeptide (Lys-Gly) (interchain with G-Cter in SUMO2) cross-link. Acidic residues predominate over residues 230–244; sequence DALDGDDDLVIDIPE.

Component of the chromatin remodeling INO80 complex; specifically part of a complex module associated with the N-terminus of INO80.

It localises to the nucleus. In terms of biological role, putative regulatory component of the chromatin remodeling INO80 complex which is involved in transcriptional regulation, DNA replication and probably DNA repair. The chain is INO80 complex subunit E (INO80E) from Bos taurus (Bovine).